A 207-amino-acid chain; its full sequence is Large ribosomal subunit protein uL4 (207 aa).

It belongs to the universal ribosomal protein uL4 family. Part of the 50S ribosomal subunit.

One of the primary rRNA binding proteins, this protein initially binds near the 5'-end of the 23S rRNA. It is important during the early stages of 50S assembly. It makes multiple contacts with different domains of the 23S rRNA in the assembled 50S subunit and ribosome. Its function is as follows. Forms part of the polypeptide exit tunnel. The polypeptide is Large ribosomal subunit protein uL4 (Geobacter metallireducens (strain ATCC 53774 / DSM 7210 / GS-15)).